A 322-amino-acid chain; its full sequence is Lipoyl synthase (322 aa).

Cys61, Cys66, Cys72, Cys87, Cys91, Cys94, and Ser300 together coordinate [4Fe-4S] cluster. The Radical SAM core domain maps to 73–289 (WDKKHATFMI…ETVAYTKGFL (217 aa)).

Belongs to the radical SAM superfamily. Lipoyl synthase family. The cofactor is [4Fe-4S] cluster.

The protein resides in the cytoplasm. The catalysed reaction is [[Fe-S] cluster scaffold protein carrying a second [4Fe-4S](2+) cluster] + N(6)-octanoyl-L-lysyl-[protein] + 2 oxidized [2Fe-2S]-[ferredoxin] + 2 S-adenosyl-L-methionine + 4 H(+) = [[Fe-S] cluster scaffold protein] + N(6)-[(R)-dihydrolipoyl]-L-lysyl-[protein] + 4 Fe(3+) + 2 hydrogen sulfide + 2 5'-deoxyadenosine + 2 L-methionine + 2 reduced [2Fe-2S]-[ferredoxin]. It functions in the pathway protein modification; protein lipoylation via endogenous pathway; protein N(6)-(lipoyl)lysine from octanoyl-[acyl-carrier-protein]: step 2/2. Its function is as follows. Catalyzes the radical-mediated insertion of two sulfur atoms into the C-6 and C-8 positions of the octanoyl moiety bound to the lipoyl domains of lipoate-dependent enzymes, thereby converting the octanoylated domains into lipoylated derivatives. The sequence is that of Lipoyl synthase from Rhizobium meliloti (strain 1021) (Ensifer meliloti).